Reading from the N-terminus, the 202-residue chain is ATP-dependent Clp protease proteolytic subunit (202 aa).

Ser106 (nucleophile) is an active-site residue. The active site involves His131.

The protein belongs to the peptidase S14 family. In terms of assembly, fourteen ClpP subunits assemble into 2 heptameric rings which stack back to back to give a disk-like structure with a central cavity, resembling the structure of eukaryotic proteasomes.

The protein resides in the cytoplasm. The enzyme catalyses Hydrolysis of proteins to small peptides in the presence of ATP and magnesium. alpha-casein is the usual test substrate. In the absence of ATP, only oligopeptides shorter than five residues are hydrolyzed (such as succinyl-Leu-Tyr-|-NHMec, and Leu-Tyr-Leu-|-Tyr-Trp, in which cleavage of the -Tyr-|-Leu- and -Tyr-|-Trp bonds also occurs).. Cleaves peptides in various proteins in a process that requires ATP hydrolysis. Has a chymotrypsin-like activity. Plays a major role in the degradation of misfolded proteins. This is ATP-dependent Clp protease proteolytic subunit from Verminephrobacter eiseniae (strain EF01-2).